The sequence spans 1370 residues: DNA-directed RNA polymerase subunit beta (1370 aa).

Belongs to the RNA polymerase beta chain family. In terms of assembly, the RNAP catalytic core consists of 2 alpha, 1 beta, 1 beta' and 1 omega subunit. When a sigma factor is associated with the core the holoenzyme is formed, which can initiate transcription.

The catalysed reaction is RNA(n) + a ribonucleoside 5'-triphosphate = RNA(n+1) + diphosphate. Its function is as follows. DNA-dependent RNA polymerase catalyzes the transcription of DNA into RNA using the four ribonucleoside triphosphates as substrates. The protein is DNA-directed RNA polymerase subunit beta of Bordetella avium (strain 197N).